A 320-amino-acid chain; its full sequence is 4-diphosphocytidyl-2-C-methyl-D-erythritol kinase (320 aa).

The active site involves lysine 20. 112-122 (PVAGGMGGGSA) contributes to the ATP binding site. The active site involves aspartate 154.

Belongs to the GHMP kinase family. IspE subfamily.

The catalysed reaction is 4-CDP-2-C-methyl-D-erythritol + ATP = 4-CDP-2-C-methyl-D-erythritol 2-phosphate + ADP + H(+). It functions in the pathway isoprenoid biosynthesis; isopentenyl diphosphate biosynthesis via DXP pathway; isopentenyl diphosphate from 1-deoxy-D-xylulose 5-phosphate: step 3/6. Functionally, catalyzes the phosphorylation of the position 2 hydroxy group of 4-diphosphocytidyl-2C-methyl-D-erythritol. The sequence is that of 4-diphosphocytidyl-2-C-methyl-D-erythritol kinase from Pseudarthrobacter chlorophenolicus (strain ATCC 700700 / DSM 12829 / CIP 107037 / JCM 12360 / KCTC 9906 / NCIMB 13794 / A6) (Arthrobacter chlorophenolicus).